Reading from the N-terminus, the 429-residue chain is UDP-N-acetylglucosamine 1-carboxyvinyltransferase 2 (429 aa).

22-23 lines the phosphoenolpyruvate pocket; the sequence is KN. Arginine 93 lines the UDP-N-acetyl-alpha-D-glucosamine pocket. Catalysis depends on cysteine 117, which acts as the Proton donor. Cysteine 117 carries the 2-(S-cysteinyl)pyruvic acid O-phosphothioketal modification. UDP-N-acetyl-alpha-D-glucosamine contacts are provided by residues 122–126, aspartate 305, and isoleucine 327; that span reads RPIDQ.

Belongs to the EPSP synthase family. MurA subfamily.

Its subcellular location is the cytoplasm. The enzyme catalyses phosphoenolpyruvate + UDP-N-acetyl-alpha-D-glucosamine = UDP-N-acetyl-3-O-(1-carboxyvinyl)-alpha-D-glucosamine + phosphate. The protein operates within cell wall biogenesis; peptidoglycan biosynthesis. In terms of biological role, cell wall formation. Adds enolpyruvyl to UDP-N-acetylglucosamine. In Bacillus cereus (strain ATCC 14579 / DSM 31 / CCUG 7414 / JCM 2152 / NBRC 15305 / NCIMB 9373 / NCTC 2599 / NRRL B-3711), this protein is UDP-N-acetylglucosamine 1-carboxyvinyltransferase 2.